A 307-amino-acid chain; its full sequence is Melanoma-associated antigen F1 (307 aa).

Residues 1–55 (MLQTPESRGLPVPQAEGEKDGGHDGETRAPTASQERPKEELGAGREEGAAEPALT) are disordered. Basic and acidic residues-rich tracts occupy residues 16 to 27 (EGEKDGGHDGET) and 35 to 48 (ERPK…REEG). An MAGE domain is found at 76 to 277 (LNRTVAELVQ…HWPVQYREAL (202 aa)).

Interacts (via MAGE domain) with RING-type zinc finger-containing E3 ubiquitin-protein ligases LNX1, TRIM27 and NSMCE1; the interaction is direct. As to expression, ubiquitous.

Its function is as follows. Enhances ubiquitin ligase activity of RING-type zinc finger-containing E3 ubiquitin ligases. Proposed to act through recruitment and/or stabilization of the E2 ubiquitin-conjugating enzyme at the E3:substrate complex. MAGEF1-NSMCE1 ubiquitin ligase complex promotes proteasomal degradation of MMS19, a key component of the cytosolic iron-sulfur protein assembly (CIA) machinery. Down-regulation of MMS19 impairs the activity of several DNA repair and metabolism enzymes such as ERCC2/XPD, FANCJ, RTEL1 and POLD1 that require iron-sulfur clusters as cofactors. May negatively regulate genome integrity by inhibiting homologous recombination-mediated double-strand break DNA repair. The protein is Melanoma-associated antigen F1 of Homo sapiens (Human).